Reading from the N-terminus, the 1662-residue chain is Putative mediator of RNA polymerase II transcription subunit 23 (1662 aa).

Disordered regions lie at residues 1–24, 95–139, 206–252, and 1530–1572; these read MYTN…PQQQ, QQRP…QSQP, TTTP…STTN, and GYDD…QDTN. The stretch at 39–122 forms a coiled coil; that stretch reads QQQNIQQQQQ…QQSQQQQASL (84 aa). Residues 95 to 124 show a composition bias toward low complexity; it reads QQRPQTPQQNAQQQSQQSQQSQQQQASLGQ. The span at 1532-1560 shows a compositional bias: acidic residues; the sequence is DDDDDDEDDDYYDEDDEDEDDDNEDDQQD.

The protein belongs to the Mediator complex subunit 23 family. In terms of assembly, component of the Mediator complex.

The protein resides in the nucleus. Functionally, component of the Mediator complex, a coactivator involved in the regulated transcription of nearly all RNA polymerase II-dependent genes. Mediator functions as a bridge to convey information from gene-specific regulatory proteins to the basal RNA polymerase II transcription machinery. Mediator is recruited to promoters by direct interactions with regulatory proteins and serves as a scaffold for the assembly of a functional preinitiation complex with RNA polymerase II and the general transcription factors. The sequence is that of Putative mediator of RNA polymerase II transcription subunit 23 (med23) from Dictyostelium discoideum (Social amoeba).